The chain runs to 434 residues: uncharacterized protein (434 aa).

The next 5 helical transmembrane spans lie at 27 to 47 (IFLL…QSVI), 64 to 84 (FYLS…FVNW), 244 to 264 (IILA…ATVL), 289 to 309 (VPVN…PSLL), and 387 to 407 (LILT…GAVF).

This sequence belongs to the CbiQ family.

The protein resides in the cell membrane. This is an uncharacterized protein from Mycoplasma pneumoniae (strain ATCC 29342 / M129 / Subtype 1) (Mycoplasmoides pneumoniae).